Consider the following 257-residue polypeptide: Diphthine synthase (257 aa).

Residues L9, D83, M86, 111–112 (SI), and I163 contribute to the S-adenosyl-L-methionine site.

It belongs to the diphthine synthase family. In terms of assembly, homodimer.

The catalysed reaction is 2-[(3S)-amino-3-carboxypropyl]-L-histidyl-[translation elongation factor 2] + 3 S-adenosyl-L-methionine = diphthine-[translation elongation factor 2] + 3 S-adenosyl-L-homocysteine + 3 H(+). It functions in the pathway protein modification; peptidyl-diphthamide biosynthesis. S-adenosyl-L-methionine-dependent methyltransferase that catalyzes the trimethylation of the amino group of the modified target histidine residue in translation elongation factor 2 (EF-2), to form an intermediate called diphthine. The three successive methylation reactions represent the second step of diphthamide biosynthesis. This chain is Diphthine synthase, found in Thermoplasma acidophilum (strain ATCC 25905 / DSM 1728 / JCM 9062 / NBRC 15155 / AMRC-C165).